A 150-amino-acid chain; its full sequence is Ventricular natriuretic peptide (150 aa).

The first 21 residues, 1 to 21 (MAKSGIYLGCFILILIQNMVA), serve as a signal peptide directing secretion. A disordered region spans residues 52-75 (EEPEVYPESEDMKMDAEEEDAGIS). Cys-120 and Cys-136 are oxidised to a cystine.

It belongs to the natriuretic peptide family. As to expression, heart ventricle, and to a lower extent in heart atrium.

The protein resides in the secreted. Its function is as follows. Exhibits natriuretic and vasodepressor activity. This Anguilla japonica (Japanese eel) protein is Ventricular natriuretic peptide (vnp).